A 400-amino-acid polypeptide reads, in one-letter code: MPAFKTIDDLNDIAGKRVLVRVDLNVPVADGKVTDATRIERVAPTILELSSKGAKVILLAHFGRPKGEPVAEMSLSQIVPTVEDVLDHAISFATDCIGAPAADAVAKMNDGDILLLENTRFHKGEEKNDPAFVEELAANGDIYVNDAFSAAHRAHASTEGLARHLPAYAGRTMQAELEALEKGLGQPVRPVVAIVGGAKVSSKIDLLMNLVKKVDALVIGGGMANTFLAARGTNVGKSLCEHDLAETAKQIMIEAATSGCAIVLPEDGVVAREFTAGAANEIVDINAIPADAMVLDVGPKSVESIKAWISRAETLVWNGPLGAFEIEPFDAATVAAAKHAAECTKAGKLVSVAGGGDTVAALNHAGVSDDFTYISTAGGAFLEWMEGKELPGVAILTTAK.

Substrate-binding positions include 23–25, arginine 38, 61–64, arginine 120, and arginine 153; these read DLN and HFGR. ATP contacts are provided by residues lysine 203, glutamate 325, and 355-358; that span reads GGDT.

This sequence belongs to the phosphoglycerate kinase family. As to quaternary structure, monomer.

Its subcellular location is the cytoplasm. It carries out the reaction (2R)-3-phosphoglycerate + ATP = (2R)-3-phospho-glyceroyl phosphate + ADP. It participates in carbohydrate degradation; glycolysis; pyruvate from D-glyceraldehyde 3-phosphate: step 2/5. The sequence is that of Phosphoglycerate kinase from Agrobacterium fabrum (strain C58 / ATCC 33970) (Agrobacterium tumefaciens (strain C58)).